The chain runs to 293 residues: Protease HtpX homolog (293 aa).

The next 2 helical transmembrane spans lie at 6–26 (VAVM…LIGG) and 28–48 (SGMV…YWNS). H130 is a binding site for Zn(2+). Residue E131 is part of the active site. H134 contributes to the Zn(2+) binding site. 2 consecutive transmembrane segments (helical) span residues 145 to 165 (LTAT…FFGG) and 172 to 192 (PLGA…AMMV). E201 contacts Zn(2+).

It belongs to the peptidase M48B family. Zn(2+) serves as cofactor.

The protein localises to the cell inner membrane. This Rhodospirillum rubrum (strain ATCC 11170 / ATH 1.1.1 / DSM 467 / LMG 4362 / NCIMB 8255 / S1) protein is Protease HtpX homolog.